The primary structure comprises 501 residues: L-arabinose isomerase (501 aa).

Mn(2+) is bound by residues Glu306, Glu333, His350, and His450.

This sequence belongs to the arabinose isomerase family. In terms of assembly, homohexamer. The cofactor is Mn(2+).

It catalyses the reaction beta-L-arabinopyranose = L-ribulose. It functions in the pathway carbohydrate degradation; L-arabinose degradation via L-ribulose; D-xylulose 5-phosphate from L-arabinose (bacterial route): step 1/3. Functionally, catalyzes the conversion of L-arabinose to L-ribulose. The protein is L-arabinose isomerase of Pectobacterium atrosepticum (strain SCRI 1043 / ATCC BAA-672) (Erwinia carotovora subsp. atroseptica).